Reading from the N-terminus, the 127-residue chain is Aspartate 1-decarboxylase (127 aa).

Residue serine 25 is the Schiff-base intermediate with substrate; via pyruvic acid of the active site. A Pyruvic acid (Ser) modification is found at serine 25. Threonine 57 is a binding site for substrate. The active-site Proton donor is the tyrosine 58. Residue 73–75 coordinates substrate; sequence GAA.

The protein belongs to the PanD family. Heterooctamer of four alpha and four beta subunits. Requires pyruvate as cofactor. Post-translationally, is synthesized initially as an inactive proenzyme, which is activated by self-cleavage at a specific serine bond to produce a beta-subunit with a hydroxyl group at its C-terminus and an alpha-subunit with a pyruvoyl group at its N-terminus.

The protein localises to the cytoplasm. The enzyme catalyses L-aspartate + H(+) = beta-alanine + CO2. Its pathway is cofactor biosynthesis; (R)-pantothenate biosynthesis; beta-alanine from L-aspartate: step 1/1. In terms of biological role, catalyzes the pyruvoyl-dependent decarboxylation of aspartate to produce beta-alanine. The chain is Aspartate 1-decarboxylase from Clostridium botulinum (strain 657 / Type Ba4).